A 609-amino-acid chain; its full sequence is UvrABC system protein C (609 aa).

A GIY-YIG domain is found at 16 to 94; the sequence is HLPGVYRHLD…IKSLRPRYNI (79 aa). Residues 203–238 enclose the UVR domain; that stretch reads REVMDEIEARMLQASTELRFEEAAVLRDQMGSLSKV.

Belongs to the UvrC family. As to quaternary structure, interacts with UvrB in an incision complex.

The protein localises to the cytoplasm. The UvrABC repair system catalyzes the recognition and processing of DNA lesions. UvrC both incises the 5' and 3' sides of the lesion. The N-terminal half is responsible for the 3' incision and the C-terminal half is responsible for the 5' incision. The chain is UvrABC system protein C from Bordetella bronchiseptica (strain ATCC BAA-588 / NCTC 13252 / RB50) (Alcaligenes bronchisepticus).